The primary structure comprises 369 residues: MSDAKLQSVLSSLSQVARQLDALPSDTPAPDSSWVKLNTNENPFPLPEIIMQSAIAALERQYLYPEDDNISLREAAANAYSVSMDQVIAGNGSSELLGLVYRAFLTPGDSVAMMSPGFSFNRKLATLQGAQFVEIEFSKDHSLPMEQLLFGPAKDAKFILLANPNNPTGTFVPVADIERLVAKSDRLIVLDEAYVDFAPENGLRLINRYSNLLVLRTFSKSYAAAGVRVGFGFGHPEIIGRLRNIQNVFNMNVIGQAVGISVLAHRAAYADNHRHIRHERRRVTLALSQLGFSVIPSHANFLLARVPTAQDGSWWQSAFARQKILVAVFPDKGLENYIRVSIGTKEQMDAFLRAASRISRILNMSTPPR.

K220 carries the post-translational modification N6-(pyridoxal phosphate)lysine.

The protein belongs to the class-II pyridoxal-phosphate-dependent aminotransferase family. Histidinol-phosphate aminotransferase subfamily. Homodimer. The cofactor is pyridoxal 5'-phosphate.

The catalysed reaction is L-histidinol phosphate + 2-oxoglutarate = 3-(imidazol-4-yl)-2-oxopropyl phosphate + L-glutamate. Its pathway is amino-acid biosynthesis; L-histidine biosynthesis; L-histidine from 5-phospho-alpha-D-ribose 1-diphosphate: step 7/9. In Mesorhizobium japonicum (strain LMG 29417 / CECT 9101 / MAFF 303099) (Mesorhizobium loti (strain MAFF 303099)), this protein is Histidinol-phosphate aminotransferase 3 (hisC3).